The primary structure comprises 1128 residues: Nck-associated protein 1 (1128 aa).

A disordered region spans residues 640–665 (AVNKKSKKQTGKKGEPEREKPGVESM). The span at 651 to 665 (KKGEPEREKPGVESM) shows a compositional bias: basic and acidic residues. A helical membrane pass occupies residues 995–1015 (IACLLMVFVAVSLPTLASNVM).

This sequence belongs to the HEM-1/HEM-2 family.

Its subcellular location is the cell membrane. It localises to the cell projection. The protein localises to the lamellipodium membrane. Part of the WAVE complex that regulates lamellipodia formation. The WAVE complex regulates actin filament reorganization via its interaction with the Arp2/3 complex. Actin remodeling activity is regulated by RAC1. Plays a role in neural tube closure. This Xenopus laevis (African clawed frog) protein is Nck-associated protein 1 (nckap1).